The primary structure comprises 877 residues: MSETVKDKVIIDEKVSTKGTVDYAEGAEYSERLSNHSSDFSQWYTDEQILHFMKKLGYENRTLYDIPEDVAYILKKMPELTLEDSFKILKDSIIYFKDDENIPHDQYEEWKRLVDLEDLDSKEGIDEYDSFDIRAFASAIKFHSPYQEVRAVVDPEDDPTIPVETFRAYFLAIIWSVIGSGFNEFFSHRVVSISLNTPIIQMFLYICGKAWAKTIPCWTITIRGRKYGINIDKPWTQKEQMFSTLLYAICQGAFYTHYNILTQKLFYHSAFSFGYQFLLSLSVQFIGFGFAGILRKFVVYPARALWPTVMPTIAINKALLGKEKHESGMSRYKFFFLTFFIMFIYNWFPTYIINILNTFNWMTWIKPSNINLANITGGVTGLGINPISSFDWNVISFNSPLVYPFWSYLTQYLGCILAALIVIAVYYSNYMSCQYLPIFTNSLYTNTGHSFKVTEVLDSDNKLDVKKYQSYSPPYYSAGNLVSYGAFICAYPLMITWSFIVHSKLLFNAFKDWALNLWAMRKLKSWVTMFKSDYRALDDYDDPHSNAMKNYKEVPDWWYFAILIGSLVVGIAVVEHYPTNTPVWGLFVCLGFNFVFLIPTTILQATTGYSFGLNLLIEMVMGYALPGNPIAIMILKAFGYNIDGQADNYVSNLKIAHYCKIPPMALFRGQCVIVFIQIFVNLGVLNWQISNIKDFCTPHQNAKFTCPDAVTYYNASVVWGAIGPKRIFNYIYPIFKWCWLIGACIGIFFGVWKRWGKFYPRYFDPMLFVGGMLNMSPPYNLMYYTSGMIVSYISQYYMKRHHLNLWEKYNYVLSAGFSTGLVLSAIIIFFAVQYKDTAFNWWGNTVPYAGADGVGYPLKNITDTANGYFGYAPGHYP.

Over 1–167 (MSETVKDKVI…DPTIPVETFR (167 aa)) the chain is Cytoplasmic. Residues 168–188 (AYFLAIIWSVIGSGFNEFFSH) traverse the membrane as a helical segment. A topological domain (extracellular) is located at residue arginine 189. A helical membrane pass occupies residues 190 to 210 (VVSISLNTPIIQMFLYICGKA). Residues 211–240 (WAKTIPCWTITIRGRKYGINIDKPWTQKEQ) are Cytoplasmic-facing. A helical membrane pass occupies residues 241-261 (MFSTLLYAICQGAFYTHYNIL). The Extracellular portion of the chain corresponds to 262–272 (TQKLFYHSAFS). The chain crosses the membrane as a helical span at residues 273–293 (FGYQFLLSLSVQFIGFGFAGI). Residues 294–334 (LRKFVVYPARALWPTVMPTIAINKALLGKEKHESGMSRYKF) are Cytoplasmic-facing. A helical membrane pass occupies residues 335–355 (FFLTFFIMFIYNWFPTYIINI). Topologically, residues 356–374 (LNTFNWMTWIKPSNINLAN) are extracellular. The N-linked (GlcNAc...) asparagine glycan is linked to asparagine 374. Residues 375 to 395 (ITGGVTGLGINPISSFDWNVI) form a helical membrane-spanning segment. Residues 396 to 404 (SFNSPLVYP) lie on the Cytoplasmic side of the membrane. The helical transmembrane segment at 405–425 (FWSYLTQYLGCILAALIVIAV) threads the bilayer. The Extracellular portion of the chain corresponds to 426 to 480 (YYSNYMSCQYLPIFTNSLYTNTGHSFKVTEVLDSDNKLDVKKYQSYSPPYYSAGN). A helical transmembrane segment spans residues 481–501 (LVSYGAFICAYPLMITWSFIV). Over 502–553 (HSKLLFNAFKDWALNLWAMRKLKSWVTMFKSDYRALDDYDDPHSNAMKNYKE) the chain is Cytoplasmic. A helical membrane pass occupies residues 554-574 (VPDWWYFAILIGSLVVGIAVV). Residues 575–582 (EHYPTNTP) lie on the Extracellular side of the membrane. Residues 583–603 (VWGLFVCLGFNFVFLIPTTIL) form a helical membrane-spanning segment. The Cytoplasmic segment spans residues 604 to 614 (QATTGYSFGLN). The helical transmembrane segment at 615–635 (LLIEMVMGYALPGNPIAIMIL) threads the bilayer. The Extracellular segment spans residues 636-671 (KAFGYNIDGQADNYVSNLKIAHYCKIPPMALFRGQC). A helical transmembrane segment spans residues 672-692 (VIVFIQIFVNLGVLNWQISNI). At 693 to 730 (KDFCTPHQNAKFTCPDAVTYYNASVVWGAIGPKRIFNY) the chain is on the cytoplasmic side. A helical membrane pass occupies residues 731–751 (IYPIFKWCWLIGACIGIFFGV). Residues 752–766 (WKRWGKFYPRYFDPM) are Extracellular-facing. The helical transmembrane segment at 767–789 (LFVGGMLNMSPPYNLMYYTSGMI) threads the bilayer. Residues 790 to 811 (VSYISQYYMKRHHLNLWEKYNY) are Cytoplasmic-facing. The chain crosses the membrane as a helical span at residues 812–832 (VLSAGFSTGLVLSAIIIFFAV). At 833–877 (QYKDTAFNWWGNTVPYAGADGVGYPLKNITDTANGYFGYAPGHYP) the chain is on the extracellular side. Asparagine 860 is a glycosylation site (N-linked (GlcNAc...) asparagine).

Belongs to the oligopeptide OPT transporter family.

It is found in the membrane. Transports tetra- and pentapeptides. Does not transport glutathione. The sequence is that of Oligopeptide transporter 2 (OPT2) from Saccharomyces cerevisiae (strain ATCC 204508 / S288c) (Baker's yeast).